Here is a 286-residue protein sequence, read N- to C-terminus: ATP phosphoribosyltransferase (286 aa).

Belongs to the ATP phosphoribosyltransferase family. Long subfamily. Mg(2+) serves as cofactor.

The protein resides in the cytoplasm. It catalyses the reaction 1-(5-phospho-beta-D-ribosyl)-ATP + diphosphate = 5-phospho-alpha-D-ribose 1-diphosphate + ATP. The protein operates within amino-acid biosynthesis; L-histidine biosynthesis; L-histidine from 5-phospho-alpha-D-ribose 1-diphosphate: step 1/9. Feedback inhibited by histidine. Functionally, catalyzes the condensation of ATP and 5-phosphoribose 1-diphosphate to form N'-(5'-phosphoribosyl)-ATP (PR-ATP). Has a crucial role in the pathway because the rate of histidine biosynthesis seems to be controlled primarily by regulation of HisG enzymatic activity. This is ATP phosphoribosyltransferase from Paenarthrobacter aurescens (strain TC1).